The sequence spans 251 residues: Orotidine 5'-phosphate decarboxylase (251 aa).

Residues Asp-19, Lys-42, 69-78, Thr-133, Arg-194, Gln-204, Gly-224, and Arg-225 each bind substrate; that span reads DLKFHDIPNT. The Proton donor role is filled by Lys-71.

It belongs to the OMP decarboxylase family. Type 1 subfamily. In terms of assembly, homodimer.

It carries out the reaction orotidine 5'-phosphate + H(+) = UMP + CO2. It functions in the pathway pyrimidine metabolism; UMP biosynthesis via de novo pathway; UMP from orotate: step 2/2. In terms of biological role, catalyzes the decarboxylation of orotidine 5'-monophosphate (OMP) to uridine 5'-monophosphate (UMP). This is Orotidine 5'-phosphate decarboxylase from Syntrophus aciditrophicus (strain SB).